The chain runs to 579 residues: SHC-transforming protein 1 (579 aa).

N-acetylmethionine is present on M1. The segment at M1 to H137 is disordered. A compositionally biased stretch (low complexity) spans E16–P44. A phosphoserine mark is found at S36 and S139. At K154 the chain carries N6-acetyllysine. The PID domain maps to M156 to E339. The segment at W337–E357 is disordered. The CH1 stretch occupies residues E340–P483. Phosphotyrosine occurs at positions 349, 350, and 423. The tract at residues A432–P451 is disordered. Phosphoserine is present on S449. In terms of domain architecture, SH2 spans W484–V575.

Interacts with CPNE3; this interaction may mediate the binding of CPNE3 with ERBB2. Interacts with the NPXY motif of tyrosine-phosphorylated IGF1R and INSR in vitro via the PID domain. Once activated, binds to GRB2. Interacts with tyrosine-phosphorylated DDR2 and CD3T. Interacts with the N-terminal region of APS. Interacts with GRB7 and KIT. Interacts with PTK2/FAK1. Interacts with phosphorylated LRP1 and IRS4. Interacts with FLT4 (tyrosine-phosphorylated). Interacts with PDGFRB (tyrosine-phosphorylated). Interacts with ERBB4. Interacts with TEK/TIE2 (tyrosine-phosphorylated). Interacts with ALK, GAB2, TRIM31, INPP5D/SHIP1 and INPPL1/SHIP2. Interacts with PTPN6/SHP (tyrosine phosphorylated). Identified in a complex containing FGFR4, NCAM1, CDH2, PLCG1, FRS2, SRC, SHC1, GAP43 and CTTN. Interacts with EPHB1 and GRB2; activates the MAPK/ERK cascade to regulate cell migration. Interacts with the Trk receptors NTRK1, NTRK2 and NTRK3; in a phosphotyrosine-dependent manner. Interacts with CEACAM1; this interaction is CEACAM1-phosphorylation-dependent and mediates interaction with EGFR or INSR resulting in decrease coupling of SHC1 to the MAPK3/ERK1-MAPK1/ERK2 pathway. Interacts (via PID domain) with PEAK1 (when phosphorylated at 'Tyr-1177'). Found in a complex with PPP1CA, PPP1CC, SHC1 and PEAK1. Phosphorylated in response to FLT4 signaling. Tyrosine phosphorylated by ligand-activated PDGFRB. May be tyrosine phosphorylated by activated PTK2/FAK1. Tyrosine phosphorylated by TEK/TIE2. Tyrosine phosphorylated by activated PTK2B/PYK2. Dephosphorylation by PTPN2 may regulate interaction with GRB2. Phosphorylated by activated epidermal growth factor receptor. Phosphorylated in response to KIT signaling. Isoform p47Shc and isoform p52Shc are phosphorylated on tyrosine residues of the Pro-rich domain. Isoform p66Shc is phosphorylated on Ser-36 by PRKCB upon treatment with insulin, hydrogen peroxide or irradiation with ultraviolet light. FLT3 signaling promotes tyrosine phosphorylation of isoform p47Shc and isoform p52Shc. Also tyrosine phosphorylated by ligand-activated ALK. In terms of tissue distribution, widely expressed. Expressed in neural stem cells but absent in mature neurons.

It is found in the cytoplasm. It localises to the cell junction. The protein resides in the focal adhesion. Its subcellular location is the mitochondrion matrix. The protein localises to the mitochondrion. Its function is as follows. Signaling adapter that couples activated growth factor receptors to signaling pathways. Participates in signaling downstream of the angiopoietin receptor TEK/TIE2, and plays a role in the regulation of endothelial cell migration and sprouting angiogenesis. Participates in a signaling cascade initiated by activated KIT and KITLG/SCF. Isoform p47Shc and isoform p52Shc, once phosphorylated, couple activated receptor kinases to Ras via the recruitment of the GRB2/SOS complex and are implicated in the cytoplasmic propagation of mitogenic signals. Isoform p47Shc and isoform p52 may thus function as initiators of the Ras signaling cascade in various non-neuronal systems. Isoform p66Shc does not mediate Ras activation, but is involved in signal transduction pathways that regulate the cellular response to oxidative stress and life span. Isoform p66Shc acts as a downstream target of the tumor suppressor p53 and is indispensable for the ability of stress-activated p53 to induce elevation of intracellular oxidants, cytochrome c release and apoptosis. The expression of isoform p66Shc has been correlated with life span. The protein is SHC-transforming protein 1 (Shc1) of Mus musculus (Mouse).